The chain runs to 223 residues: Cytidylate kinase (223 aa).

10 to 18 (GPASSGKST) is a binding site for ATP.

This sequence belongs to the cytidylate kinase family. Type 1 subfamily.

The protein localises to the cytoplasm. The enzyme catalyses CMP + ATP = CDP + ADP. It carries out the reaction dCMP + ATP = dCDP + ADP. The polypeptide is Cytidylate kinase (Streptococcus pneumoniae (strain Hungary19A-6)).